The primary structure comprises 163 residues: Centrosomal protein of 19 kDa (163 aa).

The protein belongs to the CEP19 family. Interacts with CEP43; this interaction is required for its localization to the mother centriole. Interacts (via residues 121-150) with RABL2B. Interacts (via C-terminus) with CEP350; this interaction is required for its localization to the mother centriole.

It is found in the cytoplasm. Its subcellular location is the cytoskeleton. The protein resides in the microtubule organizing center. The protein localises to the centrosome. It localises to the centriole. It is found in the spindle pole. Its subcellular location is the cilium basal body. Its function is as follows. Required for ciliation. Recruits the RABL2B GTPase to the ciliary base to initiate ciliation. After specifically capturing the activated GTP-bound RABL2B, the CEP19-RABL2B complex binds intraflagellar transport (IFT) complex B from the large pool pre-docked at the base of the cilium and thus triggers its entry into the cilia. Involved in the early steps in cilia formation by recruiting the ciliary vesicles (CVs) to the distal end of the mother centriole where they fuse to initiate cilium assembly. Involved in microtubule (MT) anchoring to the centrosomes. This Homo sapiens (Human) protein is Centrosomal protein of 19 kDa (CEP19).